The sequence spans 219 residues: Guanylate kinase (219 aa).

Positions 15–194 (GLMFVLSSPS…AFAEVHSILK (180 aa)) constitute a Guanylate kinase-like domain. Residue 22–29 (SPSGAGKT) participates in ATP binding.

It belongs to the guanylate kinase family.

It is found in the cytoplasm. The enzyme catalyses GMP + ATP = GDP + ADP. In terms of biological role, essential for recycling GMP and indirectly, cGMP. In Rhodopseudomonas palustris (strain BisB18), this protein is Guanylate kinase.